The primary structure comprises 216 residues: ATP synthase subunit C lysine N-methyltransferase (216 aa).

Methionine 1 carries the N-acetylmethionine modification. Residues 1–12 (MERGETPEEERQ) show a composition bias toward basic and acidic residues. The interval 1-25 (MERGETPEEERQSGCVLPTSPESDS) is disordered. Residues 31 to 50 (WGFLITGVIGGALVTVYAVT) traverse the membrane as a helical segment. A required for mitochondrial location region spans residues 51–85 (TPFIAPALRKVCLPFVPATSRQVENVVKMLQHRRG).

It belongs to the ANT/ATPSC lysine N-methyltransferase family.

The protein resides in the mitochondrion membrane. The catalysed reaction is L-lysyl-[protein] + 3 S-adenosyl-L-methionine = N(6),N(6),N(6)-trimethyl-L-lysyl-[protein] + 3 S-adenosyl-L-homocysteine + 3 H(+). In terms of biological role, mitochondrial protein-lysine N-methyltransferase that trimethylates ATP synthase subunit C, ATP5MC1 and ATP5MC2. Trimethylation is required for proper incorporation of the C subunit into the ATP synthase complex and mitochondrial respiration. Promotes chronic pain. Involved in persistent inflammatory and neuropathic pain: methyltransferase activity in the mitochondria of sensory neurons promotes chronic pain via a pathway that depends on the production of reactive oxygen species (ROS) and on the engagement of spinal cord microglia. The polypeptide is ATP synthase subunit C lysine N-methyltransferase (Atpsckmt) (Rattus norvegicus (Rat)).